Consider the following 394-residue polypeptide: DNA replication and repair protein RecF (394 aa).

30-37 (GRNGFGKT) provides a ligand contact to ATP.

It belongs to the RecF family.

The protein resides in the cytoplasm. The RecF protein is involved in DNA metabolism; it is required for DNA replication and normal SOS inducibility. RecF binds preferentially to single-stranded, linear DNA. It also seems to bind ATP. This is DNA replication and repair protein RecF from Corynebacterium glutamicum (strain R).